The primary structure comprises 612 residues: Actin-binding LIM protein 2 (612 aa).

4 LIM zinc-binding domains span residues 22–81 (ILCN…LYGT), 81–141 (TRCF…TLLG), 151–210 (RSCG…KFGI), and 210–270 (IRCD…ARTE). Zn(2+) contacts are provided by Cys-83, Cys-86, His-103, Cys-106, Cys-109, Cys-112, Cys-131, and Cys-134. Residues Cys-212, Cys-215, His-232, Cys-235, Cys-238, Cys-241, His-260, and Cys-263 each contribute to the Zn(2+) site. Residues 269-278 (TEDKSKETRT) show a composition bias toward basic and acidic residues. Disordered regions lie at residues 269–295 (TEDKSKETRTSSESIVSVPASSTSGSP) and 341–433 (AVGD…DNIY). Positions 279 to 295 (SSESIVSVPASSTSGSP) are enriched in low complexity. Ser-282, Ser-294, Gly-351, Arg-356, Ser-365, and Ser-368 each carry phosphoserine. Low complexity predominate over residues 364-373 (SSPSSAGSVS). Positions 394–416 (SGRSTPSLSVHSDSRPPSSTYQQ) are enriched in polar residues. At Ser-453 the chain carries Phosphoserine. Positions 471-498 (ADTRTNSPDLDSQSLSLSSGTDQEPLQR) are disordered. Residue Thr-473 is modified to Phosphothreonine. Residues Ser-477 and Ser-579 each carry the phosphoserine modification. Positions 477 to 489 (SPDLDSQSLSLSS) are enriched in low complexity. Residues 544 to 612 (TREYKIYPYD…NDLKKKALLF (69 aa)) form the HP domain.

In terms of assembly, interacts with F-actin and ABRA. In terms of tissue distribution, expressed in brain. Highly expressed in caudate/putamen, moderately expressed in the olfactory bulb. In the hippocampus, expressed in the CA1, CA2 and CA3 fields. In the cerebellum, expressed in Purkinje cells.

Its subcellular location is the cytoplasm. In terms of biological role, may act as scaffold protein. May stimulate ABRA activity and ABRA-dependent SRF transcriptional activity. The polypeptide is Actin-binding LIM protein 2 (Ablim2) (Mus musculus (Mouse)).